The chain runs to 692 residues: DNA ligase (692 aa).

Residues 1 to 14 (MQPDLFSTASQADA) are compositionally biased toward polar residues. The segment at 1-27 (MQPDLFSTASQADANATPEEPDASNPA) is disordered. Residues 54 to 58 (DAEYD), 103 to 104 (SL), and Glu134 contribute to the NAD(+) site. Lys136 (N6-AMP-lysine intermediate) is an active-site residue. NAD(+) contacts are provided by Arg157, Glu194, Lys311, and Lys335. Positions 429, 432, 447, and 454 each coordinate Zn(2+). The region spanning 612–692 (NKPKPFAGKT…ALLQLLDTHE (81 aa)) is the BRCT domain.

Belongs to the NAD-dependent DNA ligase family. LigA subfamily. Requires Mg(2+) as cofactor. It depends on Mn(2+) as a cofactor.

The enzyme catalyses NAD(+) + (deoxyribonucleotide)n-3'-hydroxyl + 5'-phospho-(deoxyribonucleotide)m = (deoxyribonucleotide)n+m + AMP + beta-nicotinamide D-nucleotide.. In terms of biological role, DNA ligase that catalyzes the formation of phosphodiester linkages between 5'-phosphoryl and 3'-hydroxyl groups in double-stranded DNA using NAD as a coenzyme and as the energy source for the reaction. It is essential for DNA replication and repair of damaged DNA. This Janthinobacterium sp. (strain Marseille) (Minibacterium massiliensis) protein is DNA ligase.